The chain runs to 275 residues: COP9 signalosome complex subunit 7a (275 aa).

At Ser-2 the chain carries N-acetylserine. Residues 2 to 159 form the PCI domain; sequence SAEVKVTGQN…QRLEVDYSIG (158 aa). A coiled-coil region spans residues 185 to 233; sequence LSGIEEQVSRANQHKEQQLGLKQQIESEVANLKKTIKVTTAAAAAATSQ. Residues 227–275 are disordered; sequence AAAATSQDPEQHLTELREPAPGTNQRQPSKKASKGKGLRGSAKIWSKSN. Residues 235–244 are compositionally biased toward basic and acidic residues; the sequence is PEQHLTELRE. Residues 254–263 are compositionally biased toward basic residues; sequence PSKKASKGKG.

Belongs to the CSN7/EIF3M family. CSN7 subfamily. Component of the CSN complex, composed of COPS1/GPS1, COPS2, COPS3, COPS4, COPS5, COPS6, COPS7 (COPS7A or COPS7B), COPS8 and COPS9. In the complex, it probably interacts directly with COPS1, COPS2, COPS4, COPS5, COPS6 and COPS8. Interacts with PMF1. Interacts with the translation initiation factor EIF3S6. Interacts with CK2 and PKD. Interacts directly with ID3. Post-translationally, phosphorylated by CK2 and PKD kinases.

The protein resides in the cytoplasm. The protein localises to the nucleus. Component of the COP9 signalosome complex (CSN), a complex involved in various cellular and developmental processes. The CSN complex is an essential regulator of the ubiquitin (Ubl) conjugation pathway by mediating the deneddylation of the cullin subunits of SCF-type E3 ligase complexes, leading to decrease the Ubl ligase activity of SCF-type complexes such as SCF, CSA or DDB2. The complex is also involved in phosphorylation of p53/TP53, JUN, I-kappa-B-alpha/NFKBIA, ITPK1 and IRF8/ICSBP, possibly via its association with CK2 and PKD kinases. CSN-dependent phosphorylation of TP53 and JUN promotes and protects degradation by the Ubl system, respectively. The protein is COP9 signalosome complex subunit 7a (COPS7A) of Pongo abelii (Sumatran orangutan).